Reading from the N-terminus, the 162-residue chain is Cyclic pyranopterin monophosphate synthase (162 aa).

Substrate contacts are provided by residues 75–77 and 116–117; these read MCH and ME. D131 is an active-site residue.

Belongs to the MoaC family. As to quaternary structure, homohexamer; trimer of dimers.

The catalysed reaction is (8S)-3',8-cyclo-7,8-dihydroguanosine 5'-triphosphate = cyclic pyranopterin phosphate + diphosphate. Its pathway is cofactor biosynthesis; molybdopterin biosynthesis. Catalyzes the conversion of (8S)-3',8-cyclo-7,8-dihydroguanosine 5'-triphosphate to cyclic pyranopterin monophosphate (cPMP). This chain is Cyclic pyranopterin monophosphate synthase, found in Staphylococcus epidermidis (strain ATCC 35984 / DSM 28319 / BCRC 17069 / CCUG 31568 / BM 3577 / RP62A).